A 1509-amino-acid chain; its full sequence is ABC transporter G family member 38 (1509 aa).

Residues 196 to 467 enclose the ABC transporter 1 domain; sequence LGLVGLNFAK…FERCGFRCPE (272 aa). 229–236 provides a ligand contact to ATP; sequence GPPSSGKT. The ABC transmembrane type-2 1 domain maps to 545–758; the sequence is ELLKTSCSKE…AYIAFSSNEM (214 aa). Transmembrane regions (helical) follow at residues 563-583, 598-618, 651-671, 682-702, 707-727, 733-753, and 791-811; these read FVYIFKTVQGILVALIASTVF, IYIGALIFVMITNMFSGFADL, IPSSLFESIIWVAITYYTMGF, LLVVFMLQQMAAGLFRVTAGL, VVTNTAGSLAVLIMFVLGGFI, IPKWWVWAYWCSPLTYAYIAF, and YWIATGALLGFTILFNVLFSL. Residues 908 to 1160 enclose the ABC transporter 2 domain; the sequence is MSFNEINYYV…KVVEYFEAIP (253 aa). An ATP-binding site is contributed by 953 to 960; sequence GVSGAGKT. Residues 1233-1447 form the ABC transmembrane type-2 2 domain; it reads NQFKLCLWKQ…TVYGLIVSQY (215 aa). Helical transmembrane passes span 1252–1272, 1284–1304, 1336–1356, 1367–1387, 1397–1417, 1425–1445, and 1478–1498; these read YNLVRIFFALFTALMLGTIFW, LLVIIGSMYAAVLFVGFENSV, VVVEIPYVFVETVIYTLIVYP, FFWFFYVSFFTFLYFTYYGMM, VASILGAAFYTLFNLFSGFFI, WWVWYYWLCPVAWTVYGLIVS, and FMGVVAAVLAGFTVFFAFTYA.

The protein belongs to the ABC transporter superfamily. ABCG family. PDR (TC 3.A.1.205) subfamily.

The protein resides in the membrane. Functionally, may be a general defense protein. This Oryza sativa subsp. japonica (Rice) protein is ABC transporter G family member 38.